Consider the following 143-residue polypeptide: Hemoglobin subunit alpha (143 aa).

Ser-1 is modified (N-acetylserine). A Globin domain is found at Ser-1–Arg-143. Residue His-60 participates in O2 binding. His-89 provides a ligand contact to heme b.

It belongs to the globin family. Heterotetramer of two alpha chains and two beta chains. As to expression, red blood cells.

In terms of biological role, involved in oxygen transport from gills to the various peripheral tissues. This is Hemoglobin subunit alpha (hba) from Leiostomus xanthurus (Spot).